A 143-amino-acid polypeptide reads, in one-letter code: Ribosome-binding factor A (143 aa).

Positions 123–143 (DKSLQENYKQNDKETKAEKLR) are disordered.

This sequence belongs to the RbfA family. As to quaternary structure, monomer. Binds 30S ribosomal subunits, but not 50S ribosomal subunits or 70S ribosomes.

It localises to the cytoplasm. One of several proteins that assist in the late maturation steps of the functional core of the 30S ribosomal subunit. Associates with free 30S ribosomal subunits (but not with 30S subunits that are part of 70S ribosomes or polysomes). Required for efficient processing of 16S rRNA. May interact with the 5'-terminal helix region of 16S rRNA. The chain is Ribosome-binding factor A from Francisella tularensis subsp. novicida (strain U112).